Here is an 840-residue protein sequence, read N- to C-terminus: Translation initiation factor IF-2 (840 aa).

The interval 1–251 is disordered; that stretch reads MTEEKKFSSS…GPAVPATERK (251 aa). Composition is skewed to polar residues over residues 38–50 and 65–83; these read DGTNSSAGTTPRS and NRHTNSSRSNTQGGNASRP. The span at 84-102 shows a compositional bias: low complexity; that stretch reads NQSKSQGQGGRNNQRPGSR. Composition is skewed to basic and acidic residues over residues 110–135 and 158–168; these read PMIREKKNWSTKPREGQIDYSKKTDN and KPAEQSKKAAE. Residues 169 to 207 are compositionally biased toward low complexity; it reads KPAQTKPKTAETKTTATTTQSGTGKFGGALASGNNSARN. Positions 230–239 are enriched in basic residues; that stretch reads GSKKSRRIAA. The 170-residue stretch at 341–510 folds into the tr-type G domain; it reads ARPPVVTIMG…LLQAEVLELK (170 aa). The interval 350 to 357 is G1; the sequence is GHVDHGKT. Position 350-357 (350-357) interacts with GTP; sequence GHVDHGKT. Positions 375–379 are G2; that stretch reads GITQH. The G3 stretch occupies residues 396–399; it reads DTPG. Residues 396–400 and 450–453 contribute to the GTP site; these read DTPGH and NKID. The G4 stretch occupies residues 450–453; it reads NKID. The tract at residues 486–488 is G5; that stretch reads SAK.

The protein belongs to the TRAFAC class translation factor GTPase superfamily. Classic translation factor GTPase family. IF-2 subfamily.

It is found in the cytoplasm. One of the essential components for the initiation of protein synthesis. Protects formylmethionyl-tRNA from spontaneous hydrolysis and promotes its binding to the 30S ribosomal subunits. Also involved in the hydrolysis of GTP during the formation of the 70S ribosomal complex. In Leuconostoc citreum (strain KM20), this protein is Translation initiation factor IF-2.